A 734-amino-acid polypeptide reads, in one-letter code: Photosystem I P700 chlorophyll a apoprotein A2 (734 aa).

The next 8 helical transmembrane spans lie at 46-69 (IFAS…FHVA), 135-158 (LYTG…LHLQ), 175-199 (LNHH…HVAI), 273-291 (IAHH…GHMY), 330-353 (VHFQ…QHMY), 369-395 (AALY…IFFI), 417-439 (AIIS…LYVH), and 517-535 (FLVH…LILV). The [4Fe-4S] cluster site is built by Cys559 and Cys568. The next 2 membrane-spanning stretches (helical) occupy residues 575–596 (AFYL…YWHW) and 643–665 (LSVW…MFLI). Residues His654, Met662, and Tyr670 each coordinate chlorophyll a. Trp671 serves as a coordination point for phylloquinone. The helical transmembrane segment at 707–727 (LVGLAHFSVGYIFTYAAFLIA) threads the bilayer.

Belongs to the PsaA/PsaB family. As to quaternary structure, the PsaA/B heterodimer binds the P700 chlorophyll special pair and subsequent electron acceptors. PSI consists of a core antenna complex that captures photons, and an electron transfer chain that converts photonic excitation into a charge separation. The eukaryotic PSI reaction center is composed of at least 11 subunits. The cofactor is P700 is a chlorophyll a/chlorophyll a' dimer, A0 is one or more chlorophyll a, A1 is one or both phylloquinones and FX is a shared 4Fe-4S iron-sulfur center..

It localises to the plastid. The protein resides in the chloroplast thylakoid membrane. It carries out the reaction reduced [plastocyanin] + hnu + oxidized [2Fe-2S]-[ferredoxin] = oxidized [plastocyanin] + reduced [2Fe-2S]-[ferredoxin]. PsaA and PsaB bind P700, the primary electron donor of photosystem I (PSI), as well as the electron acceptors A0, A1 and FX. PSI is a plastocyanin-ferredoxin oxidoreductase, converting photonic excitation into a charge separation, which transfers an electron from the donor P700 chlorophyll pair to the spectroscopically characterized acceptors A0, A1, FX, FA and FB in turn. Oxidized P700 is reduced on the lumenal side of the thylakoid membrane by plastocyanin. In Platanus occidentalis (Sycamore), this protein is Photosystem I P700 chlorophyll a apoprotein A2.